Reading from the N-terminus, the 96-residue chain is Invertase 7 (96 aa).

The first 19 residues, 1-19, serve as a signal peptide directing secretion; it reads MLLQAFIFLLAGFAAKISA. N-linked (GlcNAc...) asparagine glycosylation is present at Asn23. Substrate is bound by residues 39 to 42 and Gln60; that span reads WMND. Asp42 is a catalytic residue. Residues Asn64 and Asn76 are each glycosylated (N-linked (GlcNAc...) asparagine).

Belongs to the glycosyl hydrolase 32 family.

The catalysed reaction is Hydrolysis of terminal non-reducing beta-D-fructofuranoside residues in beta-D-fructofuranosides.. This is Invertase 7 (SUC7) from Saccharomyces cerevisiae (Baker's yeast).